The primary structure comprises 1636 residues: Tyrosine-protein phosphatase non-receptor type 23 (1636 aa).

Residues P8–L394 enclose the BRO1 domain. 2 TPR repeats span residues A250–A283 and E374–T407. Residues K550–Q623 adopt a coiled-coil conformation. Residues E701–K714 show a composition bias toward basic and acidic residues. Disordered regions lie at residues E701–A812 and Q888–G1151. Residue S733 is modified to Phosphoserine. The tract at residues H770–G1130 is his. 2 stretches are compositionally biased toward pro residues: residues R898–Y922 and R950–H962. R950 carries the omega-N-methylarginine modification. 6 repeat units span residues P953 to Q954, P955 to Q956, P957 to H958, P959 to Q960, P961 to H962, and P963 to S964. The tract at residues P953–S964 is 6 X 2 AA approximate tandem repeats of P-Q. Pro residues-rich tracts occupy residues L983–P1002, F1036–A1050, and H1083–C1109. Residues L1120–T1131 are compositionally biased toward polar residues. 2 positions are modified to phosphoserine: S1122 and S1123. T1131 carries the phosphothreonine modification. Residues D1192–H1452 form the Tyrosine-protein phosphatase domain. Catalysis depends on C1392, which acts as the Phosphocysteine intermediate. Residues L1513–T1636 form a disordered region. Composition is skewed to pro residues over residues P1523–S1533 and S1542–P1556. The span at A1567–A1587 shows a compositional bias: low complexity. The residue at position 1615 (R1615) is an Omega-N-methylarginine.

This sequence belongs to the protein-tyrosine phosphatase family. Non-receptor class subfamily. Interacts with GRAP2 and GRB2. Interacts with UBAP1. Interacts with CHMP4B.

It is found in the nucleus. It localises to the cytoplasm. The protein localises to the cytoplasmic vesicle. Its subcellular location is the endosome. The protein resides in the cytoskeleton. It is found in the cilium basal body. It localises to the early endosome. The catalysed reaction is O-phospho-L-tyrosyl-[protein] + H2O = L-tyrosyl-[protein] + phosphate. Its function is as follows. Plays a role in sorting of endocytic ubiquitinated cargos into multivesicular bodies (MVBs) via its interaction with the ESCRT-I complex (endosomal sorting complex required for transport I), and possibly also other ESCRT complexes. May act as a negative regulator of Ras-mediated mitogenic activity. Plays a role in ciliogenesis. In Homo sapiens (Human), this protein is Tyrosine-protein phosphatase non-receptor type 23 (PTPN23).